The following is a 40-amino-acid chain: Photosystem II reaction center protein J (40 aa).

A helical transmembrane segment spans residues 8–28 (IPLWIIGTVTGIIVIGLIGIF).

Belongs to the PsbJ family. As to quaternary structure, PSII is composed of 1 copy each of membrane proteins PsbA, PsbB, PsbC, PsbD, PsbE, PsbF, PsbH, PsbI, PsbJ, PsbK, PsbL, PsbM, PsbT, PsbX, PsbY, PsbZ, Psb30/Ycf12, at least 3 peripheral proteins of the oxygen-evolving complex and a large number of cofactors. It forms dimeric complexes.

The protein localises to the plastid. Its subcellular location is the chloroplast thylakoid membrane. Functionally, one of the components of the core complex of photosystem II (PSII). PSII is a light-driven water:plastoquinone oxidoreductase that uses light energy to abstract electrons from H(2)O, generating O(2) and a proton gradient subsequently used for ATP formation. It consists of a core antenna complex that captures photons, and an electron transfer chain that converts photonic excitation into a charge separation. The sequence is that of Photosystem II reaction center protein J from Morus indica (Mulberry).